Reading from the N-terminus, the 842-residue chain is Glucans biosynthesis glucosyltransferase H (842 aa).

6 helical membrane-spanning segments follow: residues 141–161 (LLLL…TILP), 194–214 (ILLL…TALM), 513–533 (VFLT…FLAL), 570–590 (LFAS…ILIW), 615–635 (VLLA…AFLG), and 680–700 (FLFW…VSVI).

Belongs to the glycosyltransferase 2 family. OpgH subfamily.

The protein resides in the cell inner membrane. Its pathway is glycan metabolism; osmoregulated periplasmic glucan (OPG) biosynthesis. Functionally, involved in the biosynthesis of osmoregulated periplasmic glucans (OPGs). The protein is Glucans biosynthesis glucosyltransferase H of Enterobacter sp. (strain 638).